The following is a 290-amino-acid chain: 4-hydroxy-tetrahydrodipicolinate synthase (290 aa).

T44 contributes to the pyruvate binding site. Y132 functions as the Proton donor/acceptor in the catalytic mechanism. Residue K160 is the Schiff-base intermediate with substrate of the active site. I202 contacts pyruvate.

It belongs to the DapA family. Homotetramer; dimer of dimers.

The protein localises to the cytoplasm. It catalyses the reaction L-aspartate 4-semialdehyde + pyruvate = (2S,4S)-4-hydroxy-2,3,4,5-tetrahydrodipicolinate + H2O + H(+). The protein operates within amino-acid biosynthesis; L-lysine biosynthesis via DAP pathway; (S)-tetrahydrodipicolinate from L-aspartate: step 3/4. Functionally, catalyzes the condensation of (S)-aspartate-beta-semialdehyde [(S)-ASA] and pyruvate to 4-hydroxy-tetrahydrodipicolinate (HTPA). The protein is 4-hydroxy-tetrahydrodipicolinate synthase of Citrifermentans bemidjiense (strain ATCC BAA-1014 / DSM 16622 / JCM 12645 / Bem) (Geobacter bemidjiensis).